The primary structure comprises 233 residues: Large ribosomal subunit protein uL1 (233 aa).

Belongs to the universal ribosomal protein uL1 family. In terms of assembly, part of the 50S ribosomal subunit.

Functionally, binds directly to 23S rRNA. The L1 stalk is quite mobile in the ribosome, and is involved in E site tRNA release. In terms of biological role, protein L1 is also a translational repressor protein, it controls the translation of the L11 operon by binding to its mRNA. The sequence is that of Large ribosomal subunit protein uL1 from Zymomonas mobilis subsp. mobilis (strain ATCC 31821 / ZM4 / CP4).